The chain runs to 579 residues: MNIRDLLNQRVLAAMATCGVPADLPALIAPGKKAGFGDYQANGAMGAAKAMGTNPRDLAGKIVAALDLEGIADKLEIAGPGFINIYLKPAWLGKQIALAQTDARLAVPQAEHAQTVVIDYSGPNLAKEMHVGHLRSTIIGDSLARLLEFLGHQVIRQNHVGDWGTQFGMLIAELEEQLGAKGDAALELKDLEVFYQQAKKHFDDDAAFADKARDYVVRLQGGDAQMLKLWQQFKDISLHHSSEIYQQLNVTLTDADVRGESFYNDDLAPLVKALQDQGLAVESEGAQVVFLPELADKDGNPSPVIIQKQGGGFLYATTDLAALRYRVNTLNAKRIMYFIDARQSLHMQQVFTISRKAGFVSDAVSLEHLAFGTMMGSDGKPFKTRTGGTVKLAELLSEAVDRAASVVSEKNPELAGEDIAEIARKVGIGAVKYADLCKTRTNDYVFSWESMLSFEGNTAPYLQYAYTRVQSIFRKAGVAPETLGSPILLGSEQEKALAIKLLQFSEVLDQMAREAMPHLLCTYLYDIASLYMSFYEACPILKEGVDAEVRDSRLRLCHLVARTIAQGLGLLGIEVMERM.

Positions 123–133 (PNLAKEMHVGH) match the 'HIGH' region motif.

This sequence belongs to the class-I aminoacyl-tRNA synthetase family. As to quaternary structure, monomer.

The protein resides in the cytoplasm. It catalyses the reaction tRNA(Arg) + L-arginine + ATP = L-arginyl-tRNA(Arg) + AMP + diphosphate. This chain is Arginine--tRNA ligase, found in Cellvibrio japonicus (strain Ueda107) (Pseudomonas fluorescens subsp. cellulosa).